We begin with the raw amino-acid sequence, 138 residues long: Ribosome-binding factor A (138 aa).

A disordered region spans residues 116–138 (VAQDSQHQEGPASPDAKPESTEE).

The protein belongs to the RbfA family. As to quaternary structure, monomer. Binds 30S ribosomal subunits, but not 50S ribosomal subunits or 70S ribosomes.

The protein localises to the cytoplasm. Its function is as follows. One of several proteins that assist in the late maturation steps of the functional core of the 30S ribosomal subunit. Associates with free 30S ribosomal subunits (but not with 30S subunits that are part of 70S ribosomes or polysomes). Required for efficient processing of 16S rRNA. May interact with the 5'-terminal helix region of 16S rRNA. The protein is Ribosome-binding factor A of Pseudomonas syringae pv. tomato (strain ATCC BAA-871 / DC3000).